The primary structure comprises 61 residues: MGNAVNNKDQQIDYLKNRLDMFMNVIDSLDPEATDVEDIDRLISMLDDLEAKYERFKKDWE.

Residues 34–61 (TDVEDIDRLISMLDDLEAKYERFKKDWE) adopt a coiled-coil conformation.

This is an uncharacterized protein from Bacillus subtilis (strain 168).